A 655-amino-acid polypeptide reads, in one-letter code: Fructose-1,6-bisphosphatase class 3 (655 aa).

This sequence belongs to the FBPase class 3 family. Mn(2+) is required as a cofactor.

It carries out the reaction beta-D-fructose 1,6-bisphosphate + H2O = beta-D-fructose 6-phosphate + phosphate. The protein operates within carbohydrate biosynthesis; gluconeogenesis. This chain is Fructose-1,6-bisphosphatase class 3, found in Porphyromonas gingivalis (strain ATCC 33277 / DSM 20709 / CIP 103683 / JCM 12257 / NCTC 11834 / 2561).